The primary structure comprises 548 residues: (S)-beta-macrocarpene synthase (548 aa).

The Mg(2+) site is built by aspartate 302 and aspartate 306. 4 residues coordinate substrate: aspartate 302, aspartate 306, arginine 443, and asparagine 446. The short motif at aspartate 302–aspartate 306 is the DDXXD motif element. The Mg(2+) site is built by asparagine 446, serine 450, and glutamate 454.

This sequence belongs to the terpene synthase family. As to quaternary structure, monomer. Mg(2+) serves as cofactor. It depends on Mn(2+) as a cofactor. As to expression, expressed in roots. Not detected in leaves, unless damaged by herbivory or infected by fungi.

It localises to the cytoplasm. The catalysed reaction is (S)-beta-bisabolene = (S)-beta-macrocarpene. It carries out the reaction (2E,6E)-farnesyl diphosphate = (S)-beta-bisabolene + diphosphate. It catalyses the reaction (2E)-geranyl diphosphate = (4S)-limonene + diphosphate. The enzyme catalyses (2E)-geranyl diphosphate = beta-myrcene + diphosphate. The catalysed reaction is (2E)-geranyl diphosphate = terpinolene + diphosphate. It carries out the reaction (2E)-geranyl diphosphate + H2O = (S)-linalool + diphosphate. It functions in the pathway secondary metabolite biosynthesis; terpenoid biosynthesis. Functionally, involved in the biosynthesis of the bicyclic sesquiterpene (S)-beta-macrocarpene. Can use both geranyl diphosphate and farnesyl diphosphate as substrate, but not geranylgeranyl diphosphate. Produces mainly (S)-beta-macrocarpene, but also smaller amounts of beta-bisabolene and (E)-beta-farnesene when used with farnesyl diphosphate as substrate. In the presence of geranyl diphosphate, produces the acyclic monoterpenes beta-myrcene and linalool along with minor amounts of the cyclic compounds limonene, alpha-thujene, sabinene and alpha-terpinolene. May be involved in plant defense. The chain is (S)-beta-macrocarpene synthase from Zea mays (Maize).